A 562-amino-acid chain; its full sequence is NAD-dependent malic enzyme (562 aa).

Catalysis depends on tyrosine 101, which acts as the Proton donor. Arginine 154 contacts NAD(+). Residue lysine 172 is the Proton acceptor of the active site. The a divalent metal cation site is built by glutamate 243, aspartate 244, and aspartate 267. 2 residues coordinate NAD(+): aspartate 267 and asparagine 415.

It belongs to the malic enzymes family. In terms of assembly, homotetramer. Mg(2+) serves as cofactor. The cofactor is Mn(2+).

It carries out the reaction (S)-malate + NAD(+) = pyruvate + CO2 + NADH. The enzyme catalyses oxaloacetate + H(+) = pyruvate + CO2. This Colwellia psychrerythraea (strain 34H / ATCC BAA-681) (Vibrio psychroerythus) protein is NAD-dependent malic enzyme.